Consider the following 206-residue polypeptide: Repetitive proline-rich cell wall protein 1 (206 aa).

The first 22 residues, 1-22 (MASSNFLVLLLFALFAIPQGLA), serve as a signal peptide directing secretion. 33 tandem repeats follow at residues 32 to 36 (PPVYK), 37 to 41 (PPVEK), 42 to 46 (PPVYK), 47 to 51 (PPVEK), 52 to 56 (PPVYK), 57 to 61 (PPVEK), 62 to 66 (PPVYK), 67 to 71 (PPVYK), 72 to 76 (PPVYK), 77 to 81 (PPVVK), 82 to 86 (PPVYK), 87 to 91 (PPVYK), 92 to 96 (PPVYK), 97 to 101 (PPVYK), 102 to 106 (PPVEK), 107 to 111 (PPVYK), 112 to 116 (PPVYK), 117 to 121 (PPVVK), 122 to 126 (PPVYK), 127 to 131 (PPVYK), 132 to 136 (PPVEK), 137 to 141 (PPVYK), 142 to 146 (PPVVK), 147 to 151 (PPVYK), 152 to 156 (PPVYK), 157 to 161 (PPVVK), 162 to 166 (PPVYK), 167 to 171 (PPVYK), 172 to 176 (PPVYK), 177 to 181 (PPVEK), 182 to 186 (PPVYK), 187 to 191 (PPVYK), and 192 to 196 (PPVEK). The segment at 32-201 (PPVYKPPVEK…PPVEKPPVYG (170 aa)) is 34 X 5 AA approximate tandem repeats of P-P-V-[EVY]-K. The interval 51-84 (KPPVYKPPVEKPPVYKPPVYKPPVYKPPVVKPPV) is disordered. Positions 132–206 (PPVEKPPVYK…PPVYGPPHHP (75 aa)) are disordered. One copy of the 34; approximate repeat lies at 197-201 (PPVYG).

It belongs to the plant proline-rich protein superfamily. ENOD12 family. Expressed in hypocotyls, roots and mature root nodules.

It localises to the secreted. The protein localises to the cell wall. Functionally, this is a developmentally regulated putative cell wall protein. The chain is Repetitive proline-rich cell wall protein 1 (PRP1) from Medicago truncatula (Barrel medic).